The sequence spans 291 residues: Lipoyl synthase (291 aa).

Cysteine 43, cysteine 48, cysteine 54, cysteine 69, cysteine 73, cysteine 76, and serine 280 together coordinate [4Fe-4S] cluster. The Radical SAM core domain occupies 55-269; it reads FSSRTATFLI…AAYGRARGIP (215 aa).

It belongs to the radical SAM superfamily. Lipoyl synthase family. [4Fe-4S] cluster is required as a cofactor.

It is found in the cytoplasm. The catalysed reaction is [[Fe-S] cluster scaffold protein carrying a second [4Fe-4S](2+) cluster] + N(6)-octanoyl-L-lysyl-[protein] + 2 oxidized [2Fe-2S]-[ferredoxin] + 2 S-adenosyl-L-methionine + 4 H(+) = [[Fe-S] cluster scaffold protein] + N(6)-[(R)-dihydrolipoyl]-L-lysyl-[protein] + 4 Fe(3+) + 2 hydrogen sulfide + 2 5'-deoxyadenosine + 2 L-methionine + 2 reduced [2Fe-2S]-[ferredoxin]. It functions in the pathway protein modification; protein lipoylation via endogenous pathway; protein N(6)-(lipoyl)lysine from octanoyl-[acyl-carrier-protein]: step 2/2. Functionally, catalyzes the radical-mediated insertion of two sulfur atoms into the C-6 and C-8 positions of the octanoyl moiety bound to the lipoyl domains of lipoate-dependent enzymes, thereby converting the octanoylated domains into lipoylated derivatives. In Oleidesulfovibrio alaskensis (strain ATCC BAA-1058 / DSM 17464 / G20) (Desulfovibrio alaskensis), this protein is Lipoyl synthase.